The sequence spans 213 residues: Large ribosomal subunit protein uL1 (213 aa).

The protein belongs to the universal ribosomal protein uL1 family. As to quaternary structure, part of the 50S ribosomal subunit.

In terms of biological role, binds directly to 23S rRNA. Probably involved in E site tRNA release. Functionally, protein L1 is also a translational repressor protein, it controls the translation of its operon by binding to its mRNA. The chain is Large ribosomal subunit protein uL1 from Methanoculleus marisnigri (strain ATCC 35101 / DSM 1498 / JR1).